The primary structure comprises 469 residues: Glutamate--tRNA ligase (469 aa).

The 'HIGH' region signature appears at 9–19 (PSPTGFLHVGG). The 'KMSKS' region motif lies at 236–240 (KLSKR). Lys239 contributes to the ATP binding site.

Belongs to the class-I aminoacyl-tRNA synthetase family. Glutamate--tRNA ligase type 1 subfamily. In terms of assembly, monomer.

Its subcellular location is the cytoplasm. The enzyme catalyses tRNA(Glu) + L-glutamate + ATP = L-glutamyl-tRNA(Glu) + AMP + diphosphate. In terms of biological role, catalyzes the attachment of glutamate to tRNA(Glu) in a two-step reaction: glutamate is first activated by ATP to form Glu-AMP and then transferred to the acceptor end of tRNA(Glu). In Pseudoalteromonas atlantica (strain T6c / ATCC BAA-1087), this protein is Glutamate--tRNA ligase.